The sequence spans 171 residues: UPF0398 protein stu0232 (171 aa).

This sequence belongs to the UPF0398 family.

In Streptococcus thermophilus (strain ATCC BAA-250 / LMG 18311), this protein is UPF0398 protein stu0232.